The sequence spans 179 residues: Interleukin-10 (179 aa).

The first 19 residues, 1-19, serve as a signal peptide directing secretion; that stretch reads MPSSSALLCCLVFLAGVAA. Disulfide bonds link cysteine 31/cysteine 127 and cysteine 81/cysteine 133. N-linked (GlcNAc...) asparagine glycosylation occurs at asparagine 135.

Belongs to the IL-10 family. Homodimer. Interacts with IL10RA and IL10RB.

It localises to the secreted. In terms of biological role, major immune regulatory cytokine that acts on many cells of the immune system where it has profound anti-inflammatory functions, limiting excessive tissue disruption caused by inflammation. Mechanistically, IL10 binds to its heterotetrameric receptor comprising IL10RA and IL10RB leading to JAK1 and STAT2-mediated phosphorylation of STAT3. In turn, STAT3 translocates to the nucleus where it drives expression of anti-inflammatory mediators. Targets antigen-presenting cells (APCs) such as macrophages and monocytes and inhibits their release of pro-inflammatory cytokines including granulocyte-macrophage colony-stimulating factor /GM-CSF, granulocyte colony-stimulating factor/G-CSF, IL-1 alpha, IL-1 beta, IL-6, IL-8 and TNF-alpha. Also interferes with antigen presentation by reducing the expression of MHC-class II and co-stimulatory molecules, thereby inhibiting their ability to induce T cell activation. In addition, controls the inflammatory response of macrophages by reprogramming essential metabolic pathways including mTOR signaling. In Cervus elaphus (Red deer), this protein is Interleukin-10 (IL10).